The sequence spans 220 residues: Sugar transporter SWEET1 (220 aa).

7 helical membrane-spanning segments follow: residues 9–29 (LMTF…IMPL), 44–64 (VAGL…SYAL), 70–90 (TMLF…FNYW), 106–126 (VMIA…NTVD), 138–158 (LSSV…AIVI), 167–187 (IINV…FGLL), and 191–211 (IYIY…LTLI). The region spanning 12 to 92 (FIQFCATFIT…IYYVFNYWKN (81 aa)) is the MtN3/slv 1 domain. Residues 134-217 (RLGFLSSVVC…LTLIKLYPPQ (84 aa)) form the MtN3/slv 2 domain.

This sequence belongs to the SWEET sugar transporter family.

It localises to the golgi apparatus membrane. Its subcellular location is the cell membrane. Functionally, mediates both low-affinity uptake and efflux of sugar across the membrane. The protein is Sugar transporter SWEET1 (slc50a1) of Dictyostelium discoideum (Social amoeba).